A 206-amino-acid polypeptide reads, in one-letter code: MKQRLVQLIAQTELQVTEQQVQQLVGYVELLHKWNKAYNLTSVRDPNEMLVKHIMDSIVVSAHLQGENFIDVGTGPGLPGIPLAIMCPEKNFTLLDSLGKRIRFIKQVVHELKIANVTPVQSRVEEFQPEQGFDGVISRAFASMNDMVSWCHHLPAENGHFLALKGQFSEQEVAELPEWCSVTEVKPLQIPELEGKRHLVILTAKK.

Residues Gly-73, Leu-78, 124 to 125 (VE), and Arg-139 each bind S-adenosyl-L-methionine.

It belongs to the methyltransferase superfamily. RNA methyltransferase RsmG family.

It is found in the cytoplasm. The enzyme catalyses guanosine(527) in 16S rRNA + S-adenosyl-L-methionine = N(7)-methylguanosine(527) in 16S rRNA + S-adenosyl-L-homocysteine. Its function is as follows. Specifically methylates the N7 position of guanine in position 527 of 16S rRNA. The protein is Ribosomal RNA small subunit methyltransferase G of Photobacterium profundum (strain SS9).